Here is a 431-residue protein sequence, read N- to C-terminus: Serine--tRNA ligase (431 aa).

236–238 (TAE) contributes to the L-serine binding site. Residue 267 to 269 (RSE) coordinates ATP. Glu-290 is an L-serine binding site. Residue 354–357 (EISS) participates in ATP binding. Ser-389 provides a ligand contact to L-serine.

Belongs to the class-II aminoacyl-tRNA synthetase family. Type-1 seryl-tRNA synthetase subfamily. As to quaternary structure, homodimer. The tRNA molecule binds across the dimer.

It localises to the cytoplasm. The catalysed reaction is tRNA(Ser) + L-serine + ATP = L-seryl-tRNA(Ser) + AMP + diphosphate + H(+). It carries out the reaction tRNA(Sec) + L-serine + ATP = L-seryl-tRNA(Sec) + AMP + diphosphate + H(+). The protein operates within aminoacyl-tRNA biosynthesis; selenocysteinyl-tRNA(Sec) biosynthesis; L-seryl-tRNA(Sec) from L-serine and tRNA(Sec): step 1/1. Its function is as follows. Catalyzes the attachment of serine to tRNA(Ser). Is also able to aminoacylate tRNA(Sec) with serine, to form the misacylated tRNA L-seryl-tRNA(Sec), which will be further converted into selenocysteinyl-tRNA(Sec). The chain is Serine--tRNA ligase from Herminiimonas arsenicoxydans.